Consider the following 93-residue polypeptide: MSGRRSRSRQSSGTSRISEDQINDLIIKLQQLLPELRDSRRSDKVSAARVLQDTCNYIRNLHREVDDLSERLSELLANSDTAQAALIRSLLTQ.

In terms of domain architecture, bHLH spans 6–61; the sequence is SRSRQSSGTSRISEDQINDLIIKLQQLLPELRDSRRSDKVSAARVLQDTCNYIRNL.

As to quaternary structure, homodimer. Interacts with BHLH 147, BHLH148, BHLH149, BHLH150 and IBH1. Interacts with SIEL. Expressed in root and shoot meristems, and young siliques. Low levels detected in all aerial tissues.

The protein localises to the nucleus. It is found in the cytoplasm. In terms of biological role, atypical and probable non DNA-binding bHLH transcription factor required for MONOPTEROS-dependent root initiation in embryo. Promotes the correct definition of the hypophysis cell division plane. Transcriptionally controlled by MONOPTEROS. Moves from its site of synthesis in pro-embryos cells into the hypophysis. Regulates brassinosteroid (BR) signaling by sequestering negative BR signaling components. May function as positive regulator of gibberellin signaling. May play a role in the regulation of light signaling and possibly auxin signaling. The chain is Transcription factor PRE3 (PRE3) from Arabidopsis thaliana (Mouse-ear cress).